The following is a 250-amino-acid chain: 1-(5-phosphoribosyl)-5-[(5-phosphoribosylamino)methylideneamino] imidazole-4-carboxamide isomerase (250 aa).

D8 serves as the catalytic Proton acceptor. D131 functions as the Proton donor in the catalytic mechanism.

This sequence belongs to the HisA/HisF family.

It localises to the cytoplasm. It catalyses the reaction 1-(5-phospho-beta-D-ribosyl)-5-[(5-phospho-beta-D-ribosylamino)methylideneamino]imidazole-4-carboxamide = 5-[(5-phospho-1-deoxy-D-ribulos-1-ylimino)methylamino]-1-(5-phospho-beta-D-ribosyl)imidazole-4-carboxamide. It functions in the pathway amino-acid biosynthesis; L-histidine biosynthesis; L-histidine from 5-phospho-alpha-D-ribose 1-diphosphate: step 4/9. The chain is 1-(5-phosphoribosyl)-5-[(5-phosphoribosylamino)methylideneamino] imidazole-4-carboxamide isomerase from Paraburkholderia phymatum (strain DSM 17167 / CIP 108236 / LMG 21445 / STM815) (Burkholderia phymatum).